The chain runs to 189 residues: Movement protein (189 aa).

This sequence belongs to the tombusvirus/aureusvirus movement protein p22 family.

The protein resides in the host membrane. Functionally, transports viral genome to neighboring plant cells directly through plasmosdesmata, without any budding. The movement protein allows efficient cell to cell propagation, by bypassing the host cell wall barrier. The chain is Movement protein from Artichoke mottled crinkle virus (AMCV).